Reading from the N-terminus, the 253-residue chain is Phosphoglycerate mutase 2 (253 aa).

Thr3 is subject to Phosphothreonine. Residues 10 to 17 (RHGESLWN), 23 to 24 (CG), Arg62, 89 to 92 (ERHY), Lys100, and 116 to 117 (RR) each bind substrate. The Tele-phosphohistidine intermediate role is filled by His11. Ser14 carries the phosphoserine modification. Glu89 functions as the Proton donor/acceptor in the catalytic mechanism. Position 118 is a phosphoserine (Ser118). Phosphothreonine is present on Thr121. A phosphotyrosine mark is found at Tyr132 and Tyr133. Residue Ser135 is modified to Phosphoserine. Thr152 is subject to Phosphothreonine. Residue 187–188 (GN) participates in substrate binding.

It belongs to the phosphoglycerate mutase family. BPG-dependent PGAM subfamily. As to quaternary structure, homodimer. Interacts with ENO1. As to expression, expressed in the testes (at protein level).

The enzyme catalyses (2R)-2-phosphoglycerate = (2R)-3-phosphoglycerate. It catalyses the reaction (2R)-3-phospho-glyceroyl phosphate = (2R)-2,3-bisphosphoglycerate + H(+). Functionally, interconversion of 3- and 2-phosphoglycerate with 2,3-bisphosphoglycerate as the primer of the reaction. Can also catalyze the reaction of EC 5.4.2.4 (synthase), but with a reduced activity. In Mus musculus (Mouse), this protein is Phosphoglycerate mutase 2 (Pgam2).